The following is a 340-amino-acid chain: Protein HP_1247 (340 aa).

In terms of assembly, seems to interact with H.pylori HolB.

In terms of biological role, could be the functional equivalent of DNA polymerase III delta subunit (HolA). The polypeptide is Protein HP_1247 (Helicobacter pylori (strain ATCC 700392 / 26695) (Campylobacter pylori)).